Here is a 511-residue protein sequence, read N- to C-terminus: Coatomer subunit delta (511 aa).

Positions 168–177 (QARRDAERQG) are enriched in basic and acidic residues. The disordered stretch occupies residues 168-196 (QARRDAERQGKKAPGFGGFGSSTVSGGST). Ser-223 is modified (phosphoserine). 2 positions are modified to N6-acetyllysine: Lys-233 and Lys-241. Position 244 is a phosphoserine (Ser-244). An MHD domain is found at 271-511 (MESVHMKIEE…TFLVDKYEIL (241 aa)). An N6-acetyllysine mark is found at Lys-309 and Lys-351. At Ser-493 the chain carries Phosphoserine.

The protein belongs to the adaptor complexes medium subunit family. Delta-COP subfamily. Oligomeric complex that consists of at least the alpha, beta, beta', gamma, delta, epsilon and zeta subunits. In terms of tissue distribution, ubiquitously expressed.

It localises to the cytoplasm. It is found in the golgi apparatus membrane. Its subcellular location is the cytoplasmic vesicle. The protein localises to the COPI-coated vesicle membrane. The coatomer is a cytosolic protein complex that binds to dilysine motifs and reversibly associates with Golgi non-clathrin-coated vesicles, which further mediate biosynthetic protein transport from the ER, via the Golgi up to the trans Golgi network. Coatomer complex is required for budding from Golgi membranes, and is essential for the retrograde Golgi-to-ER transport of dilysine-tagged proteins. In mammals, the coatomer can only be recruited by membranes associated to ADP-ribosylation factors (ARFs), which are small GTP-binding proteins; the complex also influences the Golgi structural integrity, as well as the processing, activity, and endocytic recycling of LDL receptors. The sequence is that of Coatomer subunit delta (ARCN1) from Bos taurus (Bovine).